Consider the following 445-residue polypeptide: Chromosome partition protein MukF (445 aa).

The leucine-zipper stretch occupies residues 213–241; that stretch reads LSETSNTLKELQDTLQAAGDELQTQILDI.

This sequence belongs to the MukF family. As to quaternary structure, interacts, and probably forms a ternary complex, with MukE and MukB via its C-terminal region. The complex formation is stimulated by calcium or magnesium. It is required for an interaction between MukE and MukB.

It localises to the cytoplasm. Its subcellular location is the nucleoid. Involved in chromosome condensation, segregation and cell cycle progression. May participate in facilitating chromosome segregation by condensation DNA from both sides of a centrally located replisome during cell division. Not required for mini-F plasmid partitioning. Probably acts via its interaction with MukB and MukE. Overexpression results in anucleate cells. It has a calcium binding activity. This chain is Chromosome partition protein MukF, found in Vibrio vulnificus (strain YJ016).